The chain runs to 361 residues: Ataxin-3 (361 aa).

A Peptide (Met-Gly) (interchain with G-Cter in ubiquitin) cross-link involves residue Met-1. The Josephin domain occupies 1 to 180; it reads MESIFHEKQE…DCEADQLLQM (180 aa). Cys-14 serves as the catalytic Nucleophile. His-119 (proton acceptor) is an active-site residue. Asn-134 is an active-site residue. Lys-200 participates in a covalent cross-link: Glycyl lysine isopeptide (Lys-Gly) (interchain with G-Cter in ubiquitin). A Phosphoserine modification is found at Ser-219. 2 UIM domains span residues 224–243 and 244–263; these read EDEE…IDME and DEEA…SSRN. A compositionally biased stretch (polar residues) spans 258–278; sequence QGSSRNISQDMTQTSGTNLTS. Residues 258-338 are disordered; sequence QGSSRNISQD…DLGDAMSEED (81 aa). Ser-265 and Ser-272 each carry phosphoserine. Basic and acidic residues predominate over residues 279–293; sequence EELRKRREAYFEKQQ. Residues 294–305 show a composition bias toward low complexity; sequence QKQQQQQQQQQQ. Positions 306-325 are enriched in polar residues; the sequence is GDLSGQSSHPCERPATSSGA. A Phosphoserine modification is found at Ser-328. A UIM 3 domain is found at 331-349; that stretch reads GDAMSEEDMLQAAVTMSLE.

Interacts with STUB1/CHIP (when monoubiquitinated). Interacts with DNA repair proteins RAD23A and RAD23B. Interacts with BECN1 (via its poly-Gln domain). Interacts with PRKN, UBR2, VCP and tubulin. Short isoform 1 interacts with CASP7. Monoubiquitinated N-terminally by UBE2W, possibly leading to activate the deubiquitinating enzyme activity. In terms of tissue distribution, ubiquitous.

It is found in the nucleus matrix. The protein resides in the nucleus. Its subcellular location is the lysosome membrane. It carries out the reaction Thiol-dependent hydrolysis of ester, thioester, amide, peptide and isopeptide bonds formed by the C-terminal Gly of ubiquitin (a 76-residue protein attached to proteins as an intracellular targeting signal).. Its function is as follows. Deubiquitinating enzyme involved in protein homeostasis maintenance, transcription, cytoskeleton regulation, myogenesis and degradation of misfolded chaperone substrates. Binds long polyubiquitin chains and trims them, while it has weak or no activity against chains of 4 or less ubiquitins. Involved in degradation of misfolded chaperone substrates via its interaction with STUB1/CHIP: recruited to monoubiquitinated STUB1/CHIP, and restricts the length of ubiquitin chain attached to STUB1/CHIP substrates and preventing further chain extension. Interacts with key regulators of transcription and represses transcription: acts as a histone-binding protein that regulates transcription. Acts as a negative regulator of mTORC1 signaling in response to amino acid deprivation by mediating deubiquitination of RHEB, thereby promoting RHEB inactivation by the TSC-TBC complex. Regulates autophagy via the deubiquitination of 'Lys-402' of BECN1 leading to the stabilization of BECN1. This is Ataxin-3 from Homo sapiens (Human).